The following is an 83-amino-acid chain: U-actitoxin-Aeq6b (83 aa).

The first 20 residues, Met-1–Cys-20, serve as a signal peptide directing secretion. Residues Ser-21–Glu-36 constitute a propeptide that is removed on maturation. Pro-82 is subject to Proline amide.

In terms of processing, contains 3 disulfide bonds. In terms of tissue distribution, expressed by acrorhagi.

The protein localises to the secreted. It is found in the nematocyst. Functionally, toxin. This Actinia equina (Beadlet anemone) protein is U-actitoxin-Aeq6b.